Here is a 539-residue protein sequence, read N- to C-terminus: Glycerol kinase (539 aa).

Residue Thr-49 coordinates ADP. The ATP site is built by Thr-49, Thr-50, and Ser-51. A sn-glycerol 3-phosphate-binding site is contributed by Thr-49. Arg-53 provides a ligand contact to ADP. 4 residues coordinate sn-glycerol 3-phosphate: Arg-119, Glu-120, Tyr-171, and Asp-280. 5 residues coordinate glycerol: Arg-119, Glu-120, Tyr-171, Asp-280, and Gln-281. The ADP site is built by Thr-302 and Gly-345. Positions 302, 345, 349, and 446 each coordinate ATP. Residues Gly-446 and Asn-450 each coordinate ADP.

The protein belongs to the FGGY kinase family.

The enzyme catalyses glycerol + ATP = sn-glycerol 3-phosphate + ADP + H(+). It participates in polyol metabolism; glycerol degradation via glycerol kinase pathway; sn-glycerol 3-phosphate from glycerol: step 1/1. With respect to regulation, inhibited by fructose 1,6-bisphosphate (FBP). Key enzyme in the regulation of glycerol uptake and metabolism. Catalyzes the phosphorylation of glycerol to yield sn-glycerol 3-phosphate. The chain is Glycerol kinase from Rhodopirellula baltica (strain DSM 10527 / NCIMB 13988 / SH1).